The primary structure comprises 424 residues: GTPase Obg (424 aa).

Residues 1–158 (MFIDTAKIFV…RWIKLELKLL (158 aa)) form the Obg domain. One can recognise an OBG-type G domain in the interval 159–331 (ADVGLIGFPN…LMKEAARLLS (173 aa)). GTP contacts are provided by residues 165-172 (GFPNVGKS), 190-194 (FTTLK), 212-215 (DIPG), 282-285 (NKSD), and 312-314 (SAA). 2 residues coordinate Mg(2+): serine 172 and threonine 192. Positions 345-424 (RFIEEEKRFT…LNDFEFDFLL (80 aa)) constitute an OCT domain.

Belongs to the TRAFAC class OBG-HflX-like GTPase superfamily. OBG GTPase family. In terms of assembly, monomer. Mg(2+) serves as cofactor.

The protein localises to the cytoplasm. Functionally, an essential GTPase which binds GTP, GDP and possibly (p)ppGpp with moderate affinity, with high nucleotide exchange rates and a fairly low GTP hydrolysis rate. Plays a role in control of the cell cycle, stress response, ribosome biogenesis and in those bacteria that undergo differentiation, in morphogenesis control. The polypeptide is GTPase Obg (Clostridium botulinum (strain Okra / Type B1)).